A 328-amino-acid chain; its full sequence is L-serine dehydratase/L-threonine deaminase (328 aa).

K41 carries the N6-(pyridoxal phosphate)lysine modification. P128 contacts pyridoxal 5'-phosphate.

It belongs to the serine/threonine dehydratase family. In terms of assembly, homodimer. The cofactor is pyridoxal 5'-phosphate. Predominantly expressed in the perivenous regions of the liver.

The protein localises to the cytoplasm. It carries out the reaction L-serine = pyruvate + NH4(+). It catalyses the reaction L-threonine = 2-oxobutanoate + NH4(+). Its pathway is carbohydrate biosynthesis; gluconeogenesis. In terms of biological role, catalyzes the pyridoxal-phosphate-dependent dehydrative deamination of L-threonine and L-serine to ammonia and alpha-ketobutyrate and pyruvate, respectively. In Homo sapiens (Human), this protein is L-serine dehydratase/L-threonine deaminase (SDS).